The following is a 666-amino-acid chain: MAINTSNLCSLLFLLSLFLLSTTVSLAESEFDRQEYEECKRQCMQLETSGQMRRCVSQCDKRFEEDIDWSKYDNQDDPQTDCQQCQRRCRQQESGPRQQQYCQRRCKEICEEEEEYNRQRDPQQQYEQCQERCQRHETEPRHMQTCQQRCERRYEKEKRKQQKRYEEQQREDEEKYEERMKEEDNKRDPQQREYEDCRRRCEQQEPRQQYQCQRRCREQQRQHGRGGDLINPQRGGSGRYEEGEEKQSDNPYYFDERSLSTRFRTEEGHISVLENFYGRSKLLRALKNYRLVLLEANPNAFVLPTHLDADAILLVTGGRGALKMIHRDNRESYNLECGDVIRIPAGTTFYLINRDNNERLHIAKFLQTISTPGQYKEFFPAGGQNPEPYLSTFSKEILEAALNTQAERLRGVLGQQREGVIISASQEQIRELTRDDSESRRWHIRRGGESSRGPYNLFNKRPLYSNKYGQAYEVKPEDYRQLQDMDVSVFIANITQGSMMGPFFNTRSTKVVVVASGEADVEMACPHLSGRHGGRRGGKRHEEEEDVHYEQVKARLSKREAIVVPVGHPVVFVSSGNENLLLFAFGINAQNNHENFLAGRERNVLQQIEPQAMELAFAAPRKEVEELFNSQDESIFFPGPRQHQQQSSRSTKQQQPLVSILDFVGF.

Positions 1-27 (MAINTSNLCSLLFLLSLFLLSTTVSLA) are cleaved as a signal peptide. Disordered stretches follow at residues 161 to 191 (QQKR…DPQQ) and 221 to 251 (RQHG…SDNP). The segment covering 239–251 (RYEEGEEKQSDNP) has biased composition (basic and acidic residues). Cupin type-1 domains are found at residues 271–410 (SVLE…ERLR) and 455–625 (YNLF…KEVE).

The protein belongs to the 7S seed storage protein family.

The protein localises to the secreted. Functionally, antimicrobial peptides 2b, 2c and 2d have antibacterial and antifungal activity against a range of species. In Macadamia integrifolia (Macadamia nut), this protein is Vicilin-like antimicrobial peptides 2-2.